The following is a 295-amino-acid chain: MSSKCESVKPQLVNEVLGYWDLLKPKIMYLVVLTGITGMIIAPGNIHPFIGIISTLCIALGSGAAGAINMWYDSDIDALMQRTKNRPIPSGKIARSTAIELGLVLSVISVTVMMIAVNYLSGILLAISIGFYSLVYTMYLKRRTPQNIVIGGIAGALPPIIGWTSVTNAISIESLILFLIIFVWTPPHFWALSLLNYQEYEKAKVPMLPVTHGIFTTKIYILVYSIILFIITLLPGIFLKDCLLYETCAIPLGMTFVFHAFKVFVSINHYKYKAMFTYSIAYLFILFICIIISSF.

9 helical membrane-spanning segments follow: residues 27 to 47 (IMYL…GNIH), 48 to 68 (PFIG…AGAI), 93 to 115 (IARS…VMMI), 119 to 136 (YLSG…SLVY), 147 to 167 (NIVI…TSVT), 175 to 195 (LILF…LSLL), 219 to 239 (IYIL…GIFL), 247 to 267 (TCAI…FVSI), and 275 to 295 (MFTY…ISSF).

Belongs to the UbiA prenyltransferase family. Protoheme IX farnesyltransferase subfamily.

It is found in the cell inner membrane. It catalyses the reaction heme b + (2E,6E)-farnesyl diphosphate + H2O = Fe(II)-heme o + diphosphate. Its pathway is porphyrin-containing compound metabolism; heme O biosynthesis; heme O from protoheme: step 1/1. Functionally, converts heme B (protoheme IX) to heme O by substitution of the vinyl group on carbon 2 of heme B porphyrin ring with a hydroxyethyl farnesyl side group. This Ehrlichia chaffeensis (strain ATCC CRL-10679 / Arkansas) protein is Protoheme IX farnesyltransferase.